A 101-amino-acid chain; its full sequence is Phosphoribosyl-ATP pyrophosphatase (101 aa).

Belongs to the PRA-PH family.

The protein localises to the cytoplasm. The enzyme catalyses 1-(5-phospho-beta-D-ribosyl)-ATP + H2O = 1-(5-phospho-beta-D-ribosyl)-5'-AMP + diphosphate + H(+). It functions in the pathway amino-acid biosynthesis; L-histidine biosynthesis; L-histidine from 5-phospho-alpha-D-ribose 1-diphosphate: step 2/9. In Natronomonas pharaonis (strain ATCC 35678 / DSM 2160 / CIP 103997 / JCM 8858 / NBRC 14720 / NCIMB 2260 / Gabara) (Halobacterium pharaonis), this protein is Phosphoribosyl-ATP pyrophosphatase.